The following is a 956-amino-acid chain: Calsyntenin-3 (956 aa).

An N-terminal signal peptide occupies residues 1–19; it reads MTLLLLPLLLASLLASCSC. Residues 1-30 are Cytoplasmic-facing; it reads MTLLLLPLLLASLLASCSCNKANKHKPWIE. Residues 20 to 847 lie on the Extracellular side of the membrane; the sequence is NKANKHKPWI…SHRNSMIPSA (828 aa). Cadherin domains follow at residues 29 to 145 and 146 to 246; these read IEAE…APVF and VERL…KPSW. The segment at residues 31-51 is an intramembrane region (helical); the sequence is AEYQGIVMENDNTVLLNPPLF. Residues 52–71 lie on the Cytoplasmic side of the membrane; sequence ALDKDAPLRYAGEICGFRLH. The helical intramembrane region spans 72–94; the sequence is GSGVPFEAVILDKATGEGLIRAK. The Cytoplasmic segment spans residues 95-151; sequence EPVDCEAQKEHTFTIQAYDCGEGPDGANTKKSHKATVHVRVNDVNEFAPVFVERLYR. The helical intramembrane region spans 152–172; the sequence is AAVTEGKLYDRILRVEAIDGD. Residues 173–255 lie on the Cytoplasmic side of the membrane; it reads CSPQYSQICY…WQGWNKRIEY (83 aa). Residues 256-276 traverse the membrane as a helical segment; that stretch reads APGAGSLALFPGIRLETCDEP. The Lumenal segment spans residues 277–364; the sequence is LWNIQATIEL…PLGGPSGLGS (88 aa). Residues Asn-299, Asn-327, Asn-347, Asn-507, and Asn-740 are each glycosylated (N-linked (GlcNAc...) asparagine). A helical transmembrane segment spans residues 848–868; the sequence is ATLIIVVCVGFLVLMVVLGLV. Residues 869-956 are Cytoplasmic-facing; sequence RIHSLHRRVS…RIIETPPHRY (88 aa). The tract at residues 916 to 956 is disordered; sequence QSCVTGAVGGQQEDEDSSDSEVADSPSSDERRIIETPPHRY. The segment covering 927 to 937 has biased composition (acidic residues); sequence QEDEDSSDSEV. Residues 943–956 are compositionally biased toward basic and acidic residues; it reads SDERRIIETPPHRY.

The protein belongs to the calsyntenin family. Interacts (via cadherin domains) with both alpha and beta isoforms of neurexins (NRXN1, NRXN2 and NRXN3). Directly interacts with APBA2. Forms a tripartite complex with APBA2 and APP. Interacts with low affinity with KLC1. Interacts with SLC23A2/SVCT2. In terms of assembly, interacts with CIDEA; inhibiting the lipid transferase activity of CIDEA. Interacts with CIDEC; inhibiting the lipid transferase activity of CIDEC. Proteolytically processed under normal cellular conditions. A primary zeta-cleavage generates a large extracellular (soluble) N-terminal domain (sAlc) and a short C-terminal transmembrane fragment (CTF1). A secondary cleavage catalyzed by gamma-secretase within the transmembrane domain releases the beta-Alc-beta chain in the extracellular milieu and produces an intracellular fragment (AlcICD). This processing is strongly suppressed in the tripartite complex formed with APBA2 and APP, which seems to prevent the association with gamma-secretase. In terms of processing, ubiquitinated: endoplasmic reticulum-localized protein is ubiquitinated and degraded by the endoplasmic reticulum-associated degradation (ERAD) pathway. According to PubMed:12498782, expressed predominantly in the brain and in kidney. Low levels in heart, skeletal muscle, liver, placenta, pancreas and lung. According to PubMed:12972431, predominant expression in brain, and only marginal in kidney. In brain, present throughout all cortical layers, highest levels in GABAergic neurons (based on morphology and distribution pattern). In terms of tissue distribution, expression is restricted to adipose tissue, with high expression in multilocular thermogenic adipocytes (brown adipose tissue).

The protein resides in the postsynaptic cell membrane. It localises to the endoplasmic reticulum membrane. It is found in the golgi apparatus membrane. Its subcellular location is the cell projection. The protein localises to the dendrite. The protein resides in the lipid droplet. Functionally, postsynaptic adhesion molecule that binds to presynaptic neurexins to mediate both excitatory and inhibitory synapse formation. Promotes synapse development by acting as a cell adhesion molecule at the postsynaptic membrane, which associates with both neurexin-alpha and neurexin-beta proteins at the presynaptic membrane. Regulates the balance between excitatory and inhibitory synapses by inhibiting formation of excitatory parallel-fiber synapses and promoting formation of inhibitory synapses in the same neuron. May also be involved in ascorbate (vitamin C) uptake via its interaction with SLC23A2/SVCT2. Complex formation with APBA2 and APP, stabilizes APP metabolism and enhances APBA2-mediated suppression of beta-APP40 secretion, due to the retardation of intracellular APP maturation. Its function is as follows. Adipose-specific isoform that plays a key role in adaptive thermogenesis. Facilitates the efficient use of stored triglyceride by promoting multilocular morphology of thermogenic adipocytes: acts by inhibiting the activity of CIDEA and CIDEC on lipid droplets, thereby preventing lipid droplet fusion and facilitating lipid utilization. May also participate in adaptive thermogenesis by promoting sympathetic innervation of thermogenic adipose tissue: acts by driving secretion of neurotrophic factor S100B from brown adipocytes, stimulating neurite outgrowth from sympathetic neurons. This Homo sapiens (Human) protein is Calsyntenin-3.